The following is a 397-amino-acid chain: HTH-type transcriptional regulator GalR (397 aa).

2 HTH lysR-type domains span residues 7-64 (PNLM…MRLT) and 99-156 (FQAR…LQPT). DNA-binding regions (H-T-H motif) lie at residues 24–43 (VSRA…RAIA) and 116–135 (MQTV…AALK).

Belongs to the LysR transcriptional regulatory family.

In terms of biological role, transcriptional regulator for the galBCD and galTAP operons, encoding genes of the gallate degradation pathway. The polypeptide is HTH-type transcriptional regulator GalR (galR) (Pseudomonas putida (strain ATCC 47054 / DSM 6125 / CFBP 8728 / NCIMB 11950 / KT2440)).